Consider the following 192-residue polypeptide: Elongation factor P (192 aa).

Belongs to the elongation factor P family.

The protein localises to the cytoplasm. Its pathway is protein biosynthesis; polypeptide chain elongation. Its function is as follows. Involved in peptide bond synthesis. Stimulates efficient translation and peptide-bond synthesis on native or reconstituted 70S ribosomes in vitro. Probably functions indirectly by altering the affinity of the ribosome for aminoacyl-tRNA, thus increasing their reactivity as acceptors for peptidyl transferase. In Borrelia recurrentis (strain A1), this protein is Elongation factor P.